The chain runs to 177 residues: Isopentenyl-diphosphate Delta-isomerase 2 (177 aa).

The Mn(2+) site is built by H24 and H30. Residues 28 to 160 (MLHRAFSIFV…PDVYTVWFKK (133 aa)) enclose the Nudix hydrolase domain. The active site involves C65. Residue C65 participates in Mg(2+) binding. H67 contacts Mn(2+). Position 85 (E85) interacts with Mg(2+). The Mn(2+) site is built by E110 and E112. E112 is an active-site residue.

Belongs to the IPP isomerase type 1 family. As to quaternary structure, homodimer. Mg(2+) serves as cofactor. Requires Mn(2+) as cofactor.

Its subcellular location is the cytoplasm. It catalyses the reaction isopentenyl diphosphate = dimethylallyl diphosphate. It functions in the pathway isoprenoid biosynthesis; dimethylallyl diphosphate biosynthesis; dimethylallyl diphosphate from isopentenyl diphosphate: step 1/1. Catalyzes the 1,3-allylic rearrangement of the homoallylic substrate isopentenyl (IPP) to its highly electrophilic allylic isomer, dimethylallyl diphosphate (DMAPP). This is Isopentenyl-diphosphate Delta-isomerase 2 from Photorhabdus laumondii subsp. laumondii (strain DSM 15139 / CIP 105565 / TT01) (Photorhabdus luminescens subsp. laumondii).